Here is a 790-residue protein sequence, read N- to C-terminus: LPS-assembly protein LptD (790 aa).

An N-terminal signal peptide occupies residues 1-20 (MRMLRWLILSAFSVAGAVQA).

This sequence belongs to the LptD family. In terms of assembly, component of the lipopolysaccharide transport and assembly complex. Interacts with LptE and LptA.

It localises to the cell outer membrane. Its function is as follows. Together with LptE, is involved in the assembly of lipopolysaccharide (LPS) at the surface of the outer membrane. The polypeptide is LPS-assembly protein LptD (Bordetella bronchiseptica (strain ATCC BAA-588 / NCTC 13252 / RB50) (Alcaligenes bronchisepticus)).